Reading from the N-terminus, the 341-residue chain is S-adenosylmethionine:tRNA ribosyltransferase-isomerase (341 aa).

It belongs to the QueA family. In terms of assembly, monomer.

It localises to the cytoplasm. It carries out the reaction 7-aminomethyl-7-carbaguanosine(34) in tRNA + S-adenosyl-L-methionine = epoxyqueuosine(34) in tRNA + adenine + L-methionine + 2 H(+). Its pathway is tRNA modification; tRNA-queuosine biosynthesis. Functionally, transfers and isomerizes the ribose moiety from AdoMet to the 7-aminomethyl group of 7-deazaguanine (preQ1-tRNA) to give epoxyqueuosine (oQ-tRNA). The chain is S-adenosylmethionine:tRNA ribosyltransferase-isomerase from Clostridium botulinum (strain Kyoto / Type A2).